Consider the following 1139-residue polypeptide: Dual 3',5'-cyclic-AMP and -GMP phosphodiesterase beta (1139 aa).

2 disordered regions span residues 1-42 and 154-177; these read MGKV…NINK and GISE…STSN. The Cytoplasmic portion of the chain corresponds to 1–429; sequence MGKVEDFEEH…LNLNNWISSR (429 aa). The span at 9–22 shows a compositional bias: basic and acidic residues; it reads EHNKNSNQDIEKNV. A compositionally biased stretch (polar residues) spans 29–42; sequence NSNTINDQNENINK. A helical transmembrane segment spans residues 430–450; it reads MIIIGIVMLILSFIIWPLTTW. Topologically, residues 451–462 are extracellular; sequence SLKTSTWGRETY. The chain crosses the membrane as a helical span at residues 463-483; that stretch reads IIILFHTLMAINTLILIFFII. Topologically, residues 484–498 are cytoplasmic; the sequence is IGSTELCKYSECMSY. The chain crosses the membrane as a helical span at residues 499–519; it reads VLFSLMVALWGLWNIAIGLTL. At 520–536 the chain is on the extracellular side; the sequence is EYNPNLSEMPTTTYELE. An N-linked (GlcNAc...) asparagine glycan is attached at N524. The chain crosses the membrane as a helical span at residues 537 to 557; the sequence is MIYVLTYIYGFLPLVIIDIFF. The Cytoplasmic portion of the chain corresponds to 558-564; that stretch reads PSRTKYN. A helical transmembrane segment spans residues 565–585; the sequence is WIIHLIFIFLNSSSIILVGSA. Over 586 to 592 the chain is Extracellular; the sequence is KPDFVPE. A helical transmembrane segment spans residues 593 to 613; that stretch reads IYVVFRILAYTTLCIFLYIGS. The Cytoplasmic segment spans residues 614–1139; sequence YTSELQIRYV…TLFFIKNVSD (526 aa). Positions 775-1098 constitute a PDEase domain; it reads INISQLTKMI…IMWDTLMKEE (324 aa). H847 (proton donor) is an active-site residue. 847–851 serves as a coordination point for a nucleoside 3',5'-cyclic phosphate; it reads HNTIH. H851, H887, D888, and D1000 together coordinate a divalent metal cation. Residues D888, D1000, and Q1052 each contribute to the a nucleoside 3',5'-cyclic phosphate site.

The protein belongs to the cyclic nucleotide phosphodiesterase family. A divalent metal cation is required as a cofactor.

The protein resides in the cell membrane. Its subcellular location is the endoplasmic reticulum membrane. The enzyme catalyses 3',5'-cyclic GMP + H2O = GMP + H(+). It catalyses the reaction 3',5'-cyclic AMP + H2O = AMP + H(+). It functions in the pathway purine metabolism; 3',5'-cyclic GMP degradation; GMP from 3',5'-cyclic GMP: step 1/1. It participates in purine metabolism; 3',5'-cyclic AMP degradation; AMP from 3',5'-cyclic AMP: step 1/1. Functionally, plays a role in signal transduction by regulating the intracellular concentration of cyclic nucleotides cAMP and cGMP. Catalyzes the hydrolysis of both cAMP and cGMP to 5'-AMP and 5'-GMP, respectively. By regulating cAMP levels during the asexual blood stage and, thus PKA activation, required for merozoite invasion of erythrocytes and for the parasite development immediately following invasion. The protein is Dual 3',5'-cyclic-AMP and -GMP phosphodiesterase beta of Plasmodium falciparum (isolate 3D7).